A 395-amino-acid chain; its full sequence is Na(+)/H(+) antiporter NhaA (395 aa).

11 helical membrane-spanning segments follow: residues 15 to 35 (FLGS…AGFV), 66 to 86 (IDAW…ILEI), 101 to 121 (VALP…TYLL), 132 to 152 (GWAI…LALG), 161 to 181 (AWLM…IAVF), 184 to 204 (NALY…LIGA), 219 to 239 (CILL…AGVI), 265 to 285 (ALTP…NVGV), 301 to 321 (LGIM…ATLL), 339 to 359 (VFGL…IANL), and 366 to 386 (LVIP…LAGW).

The protein belongs to the NhaA Na(+)/H(+) (TC 2.A.33) antiporter family.

It is found in the cell inner membrane. It carries out the reaction Na(+)(in) + 2 H(+)(out) = Na(+)(out) + 2 H(+)(in). In terms of biological role, na(+)/H(+) antiporter that extrudes sodium in exchange for external protons. The chain is Na(+)/H(+) antiporter NhaA from Gluconacetobacter diazotrophicus (strain ATCC 49037 / DSM 5601 / CCUG 37298 / CIP 103539 / LMG 7603 / PAl5).